Here is a 172-residue protein sequence, read N- to C-terminus: Peptidyl-prolyl cis-trans isomerase (172 aa).

One can recognise a PPIase cyclophilin-type domain in the interval 7 to 170 (FFDMSVGGQP…KKVVVEDCGQ (164 aa)).

The protein belongs to the cyclophilin-type PPIase family. Post-translationally, not glycosylated. In terms of tissue distribution, expressed in pollen.

The protein localises to the cytoplasm. It carries out the reaction [protein]-peptidylproline (omega=180) = [protein]-peptidylproline (omega=0). Binds cyclosporin A (CsA). CsA mediates some of its effects via an inhibitory action on PPIase. PPIases accelerate the folding of proteins. It catalyzes the cis-trans isomerization of proline imidic peptide bonds in oligopeptides. The protein is Peptidyl-prolyl cis-trans isomerase (PCKR1) of Catharanthus roseus (Madagascar periwinkle).